The sequence spans 489 residues: UDP-N-acetylmuramoyl-L-alanyl-D-glutamate--2,6-diaminopimelate ligase (489 aa).

Ser30 is a UDP-N-acetyl-alpha-D-muramoyl-L-alanyl-D-glutamate binding site. 108-114 is an ATP binding site; the sequence is GTNGKTT. Residues Asn149, 150–151, Ser177, Gln183, and Arg185 contribute to the UDP-N-acetyl-alpha-D-muramoyl-L-alanyl-D-glutamate site; that span reads TT. Residue Lys217 is modified to N6-carboxylysine. Residues Arg383, 407 to 410, Gly459, and Glu463 contribute to the meso-2,6-diaminopimelate site; that span reads DNPR. Positions 407–410 match the Meso-diaminopimelate recognition motif motif; sequence DNPR.

This sequence belongs to the MurCDEF family. MurE subfamily. Mg(2+) is required as a cofactor. Carboxylation is probably crucial for Mg(2+) binding and, consequently, for the gamma-phosphate positioning of ATP.

The protein localises to the cytoplasm. The catalysed reaction is UDP-N-acetyl-alpha-D-muramoyl-L-alanyl-D-glutamate + meso-2,6-diaminopimelate + ATP = UDP-N-acetyl-alpha-D-muramoyl-L-alanyl-gamma-D-glutamyl-meso-2,6-diaminopimelate + ADP + phosphate + H(+). Its pathway is cell wall biogenesis; peptidoglycan biosynthesis. Functionally, catalyzes the addition of meso-diaminopimelic acid to the nucleotide precursor UDP-N-acetylmuramoyl-L-alanyl-D-glutamate (UMAG) in the biosynthesis of bacterial cell-wall peptidoglycan. This Geobacillus thermodenitrificans (strain NG80-2) protein is UDP-N-acetylmuramoyl-L-alanyl-D-glutamate--2,6-diaminopimelate ligase.